A 419-amino-acid chain; its full sequence is UDP-N-acetylglucosamine 1-carboxyvinyltransferase 2 (419 aa).

Position 24–25 (24–25 (KN)) interacts with phosphoenolpyruvate. Arg94 contributes to the UDP-N-acetyl-alpha-D-glucosamine binding site. Catalysis depends on Cys118, which acts as the Proton donor. At Cys118 the chain carries 2-(S-cysteinyl)pyruvic acid O-phosphothioketal. UDP-N-acetyl-alpha-D-glucosamine is bound by residues 123–127 (RPIDQ), Asp307, and Ile329.

Belongs to the EPSP synthase family. MurA subfamily.

It localises to the cytoplasm. It carries out the reaction phosphoenolpyruvate + UDP-N-acetyl-alpha-D-glucosamine = UDP-N-acetyl-3-O-(1-carboxyvinyl)-alpha-D-glucosamine + phosphate. It participates in cell wall biogenesis; peptidoglycan biosynthesis. In terms of biological role, cell wall formation. Adds enolpyruvyl to UDP-N-acetylglucosamine. This Staphylococcus aureus (strain bovine RF122 / ET3-1) protein is UDP-N-acetylglucosamine 1-carboxyvinyltransferase 2.